The primary structure comprises 342 residues: Protease HtpX homolog (342 aa).

The next 2 helical transmembrane spans lie at T6 to G26 and G28 to S48. H130 lines the Zn(2+) pocket. E131 is a catalytic residue. H134 is a binding site for Zn(2+). 2 consecutive transmembrane segments (helical) span residues I145–G165 and G173–V193. Residue E202 participates in Zn(2+) binding. The segment at P290 to N342 is disordered.

The protein belongs to the peptidase M48B family. It depends on Zn(2+) as a cofactor.

It is found in the cell inner membrane. This is Protease HtpX homolog from Allorhizobium ampelinum (strain ATCC BAA-846 / DSM 112012 / S4) (Agrobacterium vitis (strain S4)).